A 506-amino-acid chain; its full sequence is Galactose/methyl galactoside import ATP-binding protein MglA (506 aa).

ABC transporter domains are found at residues 14–249 (LTMT…VGRE) and 260–506 (VPKE…AKYL). 46-53 (GENGAGKS) is an ATP binding site.

This sequence belongs to the ABC transporter superfamily. Galactose/methyl galactoside importer (TC 3.A.1.2.3) family. As to quaternary structure, the complex is composed of one ATP-binding protein (MglA), two transmembrane proteins (MglC) and a solute-binding protein (MglB).

The protein localises to the cell inner membrane. It carries out the reaction D-galactose(out) + ATP + H2O = D-galactose(in) + ADP + phosphate + H(+). It catalyses the reaction methyl beta-D-galactoside(out) + ATP + H2O = methyl beta-D-galactoside(in) + ADP + phosphate + H(+). Functionally, part of the ABC transporter complex MglABC involved in galactose/methyl galactoside import. Responsible for energy coupling to the transport system. This chain is Galactose/methyl galactoside import ATP-binding protein MglA, found in Haemophilus influenzae (strain 86-028NP).